Here is a 504-residue protein sequence, read N- to C-terminus: Heat shock 70 kDa protein 14 (504 aa).

It belongs to the heat shock protein 70 family. In terms of assembly, component of ribosome-associated complex (RAC).

The protein resides in the cytoplasm. It localises to the cytosol. In terms of biological role, component of the ribosome-associated complex (RAC), a complex involved in folding or maintaining nascent polypeptides in a folding-competent state. This Danio rerio (Zebrafish) protein is Heat shock 70 kDa protein 14 (hspa14).